We begin with the raw amino-acid sequence, 308 residues long: Aspartate carbamoyltransferase catalytic subunit (308 aa).

Carbamoyl phosphate is bound by residues Arg59 and Thr60. Lys87 lines the L-aspartate pocket. Carbamoyl phosphate-binding residues include Arg109, His137, and Gln140. The L-aspartate site is built by Arg173 and Arg224. Residues Gly267 and Pro268 each contribute to the carbamoyl phosphate site.

This sequence belongs to the aspartate/ornithine carbamoyltransferase superfamily. ATCase family. As to quaternary structure, heterododecamer (2C3:3R2) of six catalytic PyrB chains organized as two trimers (C3), and six regulatory PyrI chains organized as three dimers (R2).

It carries out the reaction carbamoyl phosphate + L-aspartate = N-carbamoyl-L-aspartate + phosphate + H(+). The protein operates within pyrimidine metabolism; UMP biosynthesis via de novo pathway; (S)-dihydroorotate from bicarbonate: step 2/3. Its function is as follows. Catalyzes the condensation of carbamoyl phosphate and aspartate to form carbamoyl aspartate and inorganic phosphate, the committed step in the de novo pyrimidine nucleotide biosynthesis pathway. In Helicobacter acinonychis (strain Sheeba), this protein is Aspartate carbamoyltransferase catalytic subunit.